The following is a 1375-amino-acid chain: DNA-directed RNA polymerase subunit beta (1375 aa).

This sequence belongs to the RNA polymerase beta chain family. In terms of assembly, the RNAP catalytic core consists of 2 alpha, 1 beta, 1 beta' and 1 omega subunit. When a sigma factor is associated with the core the holoenzyme is formed, which can initiate transcription.

It catalyses the reaction RNA(n) + a ribonucleoside 5'-triphosphate = RNA(n+1) + diphosphate. In terms of biological role, DNA-dependent RNA polymerase catalyzes the transcription of DNA into RNA using the four ribonucleoside triphosphates as substrates. This is DNA-directed RNA polymerase subunit beta from Coxiella burnetii (strain Dugway 5J108-111).